The chain runs to 249 residues: Triosephosphate isomerase (249 aa).

Substrate is bound at residue 9-11 (NWK). Residue histidine 91 is the Electrophile of the active site. Glutamate 163 serves as the catalytic Proton acceptor. Substrate contacts are provided by residues glycine 169, serine 209, and 230–231 (GG).

It belongs to the triosephosphate isomerase family. Homodimer.

It localises to the cytoplasm. The catalysed reaction is D-glyceraldehyde 3-phosphate = dihydroxyacetone phosphate. It functions in the pathway carbohydrate biosynthesis; gluconeogenesis. Its pathway is carbohydrate degradation; glycolysis; D-glyceraldehyde 3-phosphate from glycerone phosphate: step 1/1. In terms of biological role, involved in the gluconeogenesis. Catalyzes stereospecifically the conversion of dihydroxyacetone phosphate (DHAP) to D-glyceraldehyde-3-phosphate (G3P). In Halorhodospira halophila (strain DSM 244 / SL1) (Ectothiorhodospira halophila (strain DSM 244 / SL1)), this protein is Triosephosphate isomerase.